A 176-amino-acid chain; its full sequence is Signal peptidase complex catalytic subunit SEC11 (176 aa).

The Cytoplasmic segment spans residues 1 to 9 (MNLRQQLGS). The helical; Signal-anchor for type II membrane protein transmembrane segment at 10–30 (GLSMAMVLASAFAFWKLFSIV) threads the bilayer. The Lumenal portion of the chain corresponds to 31 to 176 (TMSNSPIVVV…LGLSALVQDE (146 aa)). Residues Ser-44, His-83, and Asp-118 each act as charge relay system in the active site. A C-terminal short (CTS) helix region spans residues 162-173 (ALMALLGLSALV).

Belongs to the peptidase S26B family. As to quaternary structure, component of the signal peptidase complex (SPC) composed of a catalytic subunit SEC11 and three accessory subunits SPC1, SPC2 and SPC3. The complex induces a local thinning of the ER membrane which is used to measure the length of the signal peptide (SP) h-region of protein substrates. This ensures the selectivity of the complex towards h-regions shorter than 18-20 amino acids. SPC associates with the translocon complex.

It is found in the endoplasmic reticulum membrane. The enzyme catalyses Cleavage of hydrophobic, N-terminal signal or leader sequences from secreted and periplasmic proteins.. In terms of biological role, catalytic component of the signal peptidase complex (SPC) which catalyzes the cleavage of N-terminal signal sequences from nascent proteins as they are translocated into the lumen of the endoplasmic reticulum. Specifically cleaves N-terminal signal peptides that contain a hydrophobic alpha-helix (h-region) shorter than 18-20 amino acids. The polypeptide is Signal peptidase complex catalytic subunit SEC11 (SEC11) (Ogataea parapolymorpha (strain ATCC 26012 / BCRC 20466 / JCM 22074 / NRRL Y-7560 / DL-1) (Yeast)).